We begin with the raw amino-acid sequence, 513 residues long: ATP synthase subunit alpha (513 aa).

169-176 lines the ATP pocket; sequence GDRQIGKT.

The protein belongs to the ATPase alpha/beta chains family. F-type ATPases have 2 components, CF(1) - the catalytic core - and CF(0) - the membrane proton channel. CF(1) has five subunits: alpha(3), beta(3), gamma(1), delta(1), epsilon(1). CF(0) has three main subunits: a(1), b(2) and c(9-12). The alpha and beta chains form an alternating ring which encloses part of the gamma chain. CF(1) is attached to CF(0) by a central stalk formed by the gamma and epsilon chains, while a peripheral stalk is formed by the delta and b chains.

The protein resides in the cell inner membrane. It carries out the reaction ATP + H2O + 4 H(+)(in) = ADP + phosphate + 5 H(+)(out). Produces ATP from ADP in the presence of a proton gradient across the membrane. The alpha chain is a regulatory subunit. The sequence is that of ATP synthase subunit alpha from Shewanella halifaxensis (strain HAW-EB4).